Consider the following 610-residue polypeptide: Dihydroxy-acid dehydratase (610 aa).

Asp-81 provides a ligand contact to Mg(2+). Residue Cys-122 coordinates [2Fe-2S] cluster. Mg(2+) is bound by residues Asp-123 and Lys-124. The residue at position 124 (Lys-124) is an N6-carboxylysine. Cys-193 is a binding site for [2Fe-2S] cluster. A Mg(2+)-binding site is contributed by Glu-489. Ser-515 acts as the Proton acceptor in catalysis.

This sequence belongs to the IlvD/Edd family. In terms of assembly, homodimer. The cofactor is [2Fe-2S] cluster. Mg(2+) serves as cofactor.

The enzyme catalyses (2R)-2,3-dihydroxy-3-methylbutanoate = 3-methyl-2-oxobutanoate + H2O. The catalysed reaction is (2R,3R)-2,3-dihydroxy-3-methylpentanoate = (S)-3-methyl-2-oxopentanoate + H2O. It functions in the pathway amino-acid biosynthesis; L-isoleucine biosynthesis; L-isoleucine from 2-oxobutanoate: step 3/4. Its pathway is amino-acid biosynthesis; L-valine biosynthesis; L-valine from pyruvate: step 3/4. Functions in the biosynthesis of branched-chain amino acids. Catalyzes the dehydration of (2R,3R)-2,3-dihydroxy-3-methylpentanoate (2,3-dihydroxy-3-methylvalerate) into 2-oxo-3-methylpentanoate (2-oxo-3-methylvalerate) and of (2R)-2,3-dihydroxy-3-methylbutanoate (2,3-dihydroxyisovalerate) into 2-oxo-3-methylbutanoate (2-oxoisovalerate), the penultimate precursor to L-isoleucine and L-valine, respectively. In Xylella fastidiosa (strain M12), this protein is Dihydroxy-acid dehydratase.